The sequence spans 44 residues: Poly-ADP-ribosylation-amplifying and CtIP-maintaining micropeptide (44 aa).

Positions 1–44 (MAASGGTKKAQSGGRRLREPSSRPSRRARQRPRRGALRKAGRFL) are disordered. The segment covering 24–44 (PSRRARQRPRRGALRKAGRFL) has biased composition (basic residues).

As to quaternary structure, interacts with KLHL15; preventing ubiquitination and degradation of RBBP8/CtIP. Interacts with PARP1.

It is found in the nucleus. The protein localises to the nucleolus. Its subcellular location is the chromosome. Its function is as follows. Micropeptide that acts as a regulator of DNA repair both by preventing KLHL15-mediated ubiquitination and degradation of RBBP8/CtIP, and by promoting the poly-ADP-ribosyltransferase activity of PARP1. Prevents KLHL15-mediated ubiquitination of RBBP8/CtIP by competitively blocking the association between KLHL15 and RBBP8/CtIP. Recruited to DNA damage sites via association with poly-ADP-ribose chains, and enhances the poly-ADP-ribosyltransferase activity of PARP1. The sequence is that of Poly-ADP-ribosylation-amplifying and CtIP-maintaining micropeptide from Homo sapiens (Human).